A 365-amino-acid chain; its full sequence is Protein RecA (365 aa).

77-84 (GPESSGKT) is an ATP binding site.

This sequence belongs to the RecA family.

It is found in the cytoplasm. Its function is as follows. Can catalyze the hydrolysis of ATP in the presence of single-stranded DNA, the ATP-dependent uptake of single-stranded DNA by duplex DNA, and the ATP-dependent hybridization of homologous single-stranded DNAs. It interacts with LexA causing its activation and leading to its autocatalytic cleavage. This Mesorhizobium japonicum (strain LMG 29417 / CECT 9101 / MAFF 303099) (Mesorhizobium loti (strain MAFF 303099)) protein is Protein RecA.